A 343-amino-acid chain; its full sequence is Sulfate/thiosulfate import ATP-binding protein CysA (343 aa).

An ABC transporter domain is found at 3–237 (IRISHLRKQF…PASPFVYSFV (235 aa)). 35–42 (GPSGSGKT) serves as a coordination point for ATP.

This sequence belongs to the ABC transporter superfamily. Sulfate/tungstate importer (TC 3.A.1.6) family. As to quaternary structure, the complex is composed of two ATP-binding proteins (CysA), two transmembrane proteins (CysT and CysW) and a solute-binding protein (CysP).

The protein localises to the cell inner membrane. The catalysed reaction is sulfate(out) + ATP + H2O = sulfate(in) + ADP + phosphate + H(+). The enzyme catalyses thiosulfate(out) + ATP + H2O = thiosulfate(in) + ADP + phosphate + H(+). Its function is as follows. Part of the ABC transporter complex CysAWTP involved in sulfate/thiosulfate import. Responsible for energy coupling to the transport system. The polypeptide is Sulfate/thiosulfate import ATP-binding protein CysA (Xanthomonas campestris pv. campestris (strain ATCC 33913 / DSM 3586 / NCPPB 528 / LMG 568 / P 25)).